We begin with the raw amino-acid sequence, 111 residues long: Ribosome-binding factor A (111 aa).

The protein belongs to the RbfA family. As to quaternary structure, monomer. Binds 30S ribosomal subunits, but not 50S ribosomal subunits or 70S ribosomes.

It localises to the cytoplasm. One of several proteins that assist in the late maturation steps of the functional core of the 30S ribosomal subunit. Associates with free 30S ribosomal subunits (but not with 30S subunits that are part of 70S ribosomes or polysomes). Required for efficient processing of 16S rRNA. May interact with the 5'-terminal helix region of 16S rRNA. The chain is Ribosome-binding factor A from Helicobacter pylori (strain G27).